The sequence spans 256 residues: Isoprenyl transferase (256 aa).

The active site involves aspartate 33. Residue aspartate 33 coordinates Mg(2+). Substrate-binding positions include 34–37, tryptophan 38, arginine 46, histidine 50, and 78–80; these read GNGR and STE. The Proton acceptor role is filled by asparagine 81. Substrate-binding positions include tryptophan 82, arginine 84, arginine 201, and 207 to 209; that span reads RIS. A Mg(2+)-binding site is contributed by glutamate 220.

The protein belongs to the UPP synthase family. Homodimer. The cofactor is Mg(2+).

Its function is as follows. Catalyzes the condensation of isopentenyl diphosphate (IPP) with allylic pyrophosphates generating different type of terpenoids. This chain is Isoprenyl transferase, found in Staphylococcus haemolyticus (strain JCSC1435).